Here is a 673-residue protein sequence, read N- to C-terminus: UvrABC system protein B (673 aa).

One can recognise a Helicase ATP-binding domain in the interval 26-414; that stretch reads EGLEDGLAHQ…GGDVVDQVVR (389 aa). 39–46 serves as a coordination point for ATP; the sequence is GVTGSGKT. The Beta-hairpin motif lies at 92–115; it reads YYDYYQPEAYVPSSDTFIEKDASV. The Helicase C-terminal domain maps to 431-597; the sequence is QVDDLLSEIR…GLNKKVVDIL (167 aa). The region spanning 633–668 is the UVR domain; it reads QQKIHELEGLMMQHAQNLEFEEAAQIRDQLHQLREL.

The protein belongs to the UvrB family. Forms a heterotetramer with UvrA during the search for lesions. Interacts with UvrC in an incision complex.

The protein resides in the cytoplasm. Its function is as follows. The UvrABC repair system catalyzes the recognition and processing of DNA lesions. A damage recognition complex composed of 2 UvrA and 2 UvrB subunits scans DNA for abnormalities. Upon binding of the UvrA(2)B(2) complex to a putative damaged site, the DNA wraps around one UvrB monomer. DNA wrap is dependent on ATP binding by UvrB and probably causes local melting of the DNA helix, facilitating insertion of UvrB beta-hairpin between the DNA strands. Then UvrB probes one DNA strand for the presence of a lesion. If a lesion is found the UvrA subunits dissociate and the UvrB-DNA preincision complex is formed. This complex is subsequently bound by UvrC and the second UvrB is released. If no lesion is found, the DNA wraps around the other UvrB subunit that will check the other stand for damage. This is UvrABC system protein B from Shigella flexneri.